A 285-amino-acid polypeptide reads, in one-letter code: 2-dehydro-3-deoxyphosphooctonate aldolase (285 aa).

Belongs to the KdsA family.

The protein localises to the cytoplasm. It carries out the reaction D-arabinose 5-phosphate + phosphoenolpyruvate + H2O = 3-deoxy-alpha-D-manno-2-octulosonate-8-phosphate + phosphate. It participates in carbohydrate biosynthesis; 3-deoxy-D-manno-octulosonate biosynthesis; 3-deoxy-D-manno-octulosonate from D-ribulose 5-phosphate: step 2/3. It functions in the pathway bacterial outer membrane biogenesis; lipopolysaccharide biosynthesis. This Acidovorax ebreus (strain TPSY) (Diaphorobacter sp. (strain TPSY)) protein is 2-dehydro-3-deoxyphosphooctonate aldolase.